The primary structure comprises 56 residues: Large ribosomal subunit protein bL32 (56 aa).

The tract at residues 1–37 is disordered; that stretch reads MAVQQNKKSRSRRDMRRSHDALTTAAVSVDKASGETH. Over residues 7–16 the composition is skewed to basic residues; sequence KKSRSRRDMR.

The protein belongs to the bacterial ribosomal protein bL32 family.

The protein is Large ribosomal subunit protein bL32 of Haemophilus influenzae (strain PittEE).